A 760-amino-acid chain; its full sequence is ATP-dependent DNA helicase Hel308 (760 aa).

Residues Gln-28 and 46–53 (IPTASGKT) each bind ATP. Positions 33–199 (EMGLLEKKNL…WLGAALVLSE (167 aa)) constitute a Helicase ATP-binding domain. The DEAH box signature appears at 144-147 (DEIH). One can recognise a Helicase C-terminal domain in the interval 232–426 (AVNLVLDTIK…SKLGTENALR (195 aa)).

Belongs to the helicase family. Hel308 subfamily. Monomer.

The catalysed reaction is Couples ATP hydrolysis with the unwinding of duplex DNA by translocating in the 3'-5' direction.. It catalyses the reaction ATP + H2O = ADP + phosphate + H(+). Functionally, DNA-dependent ATPase and 3'-5' DNA helicase that may be involved in repair of stalled replication forks. In Methanococcoides burtonii (strain DSM 6242 / NBRC 107633 / OCM 468 / ACE-M), this protein is ATP-dependent DNA helicase Hel308.